The primary structure comprises 509 residues: uncharacterized protein (509 aa).

The G domain maps to 108 to 225 (GKSSLCNLLA…KRHKPLFPVI (118 aa)).

This is an uncharacterized protein from Acinetobacter baylyi (strain ATCC 33305 / BD413 / ADP1).